Consider the following 838-residue polypeptide: Probable bifunctional folylpolyglutamate synthase/dihydropteroate synthase (838 aa).

The folylpolyglutamate synthase stretch occupies residues 1-418; that stretch reads MEYHEAVNFL…LVVGSLYVVA (418 aa). 46-52 is an ATP binding site; it reads GSNGKGS. Residues 541–561 are disordered; that stretch reads AADAGEDDERGAGDASDAGHD. Residues 569 to 819 form the Pterin-binding domain; the sequence is TAVMGILNVT…DVPENVAAVN (251 aa). The tract at residues 571–838 is DHPS; the sequence is VMGILNVTPN…RFEADAERED (268 aa). Asparagine 576 serves as a coordination point for Mg(2+). (7,8-dihydropterin-6-yl)methyl diphosphate contacts are provided by residues threonine 616, aspartate 649, asparagine 668, aspartate 738, lysine 774, and 807–809; that span reads RVH.

It in the N-terminal section; belongs to the folylpolyglutamate synthase family. This sequence in the C-terminal section; belongs to the DHPS family. Requires Mg(2+) as cofactor.

The catalysed reaction is (6S)-5,6,7,8-tetrahydrofolyl-(gamma-L-Glu)(n) + L-glutamate + ATP = (6S)-5,6,7,8-tetrahydrofolyl-(gamma-L-Glu)(n+1) + ADP + phosphate + H(+). The enzyme catalyses (7,8-dihydropterin-6-yl)methyl diphosphate + 4-aminobenzoate = 7,8-dihydropteroate + diphosphate. It participates in cofactor biosynthesis; tetrahydrofolylpolyglutamate biosynthesis. Its pathway is cofactor biosynthesis; tetrahydrofolate biosynthesis; 7,8-dihydrofolate from 2-amino-4-hydroxy-6-hydroxymethyl-7,8-dihydropteridine diphosphate and 4-aminobenzoate: step 1/2. Can complement an H.volcanii mutant strain that is thymidine auxotroph because it lacks the two dihydrofolate reductase genes encoded by hdrA and hdrB. The polypeptide is Probable bifunctional folylpolyglutamate synthase/dihydropteroate synthase (folCP) (Haloferax volcanii (strain ATCC 29605 / DSM 3757 / JCM 8879 / NBRC 14742 / NCIMB 2012 / VKM B-1768 / DS2) (Halobacterium volcanii)).